Consider the following 339-residue polypeptide: Heat-inducible transcription repressor HrcA (339 aa).

The protein belongs to the HrcA family.

Its function is as follows. Negative regulator of class I heat shock genes (grpE-dnaK-dnaJ and groELS operons). Prevents heat-shock induction of these operons. This is Heat-inducible transcription repressor HrcA from Clostridioides difficile (strain 630) (Peptoclostridium difficile).